The primary structure comprises 671 residues: UvrABC system protein C (671 aa).

The interval 1-20 is disordered; it reads MPHLPDSMSPEAPAGPAPAT. Positions 10–20 are enriched in low complexity; the sequence is PEAPAGPAPAT. The region spanning 37-115 is the GIY-YIG domain; the sequence is PLPGVYRYFD…IKTLNPKYNI (79 aa). One can recognise a UVR domain in the interval 232 to 267; sequence RQVMEALEARMMAHAEKLEFEQAAELRNQVAALSNV.

Belongs to the UvrC family. As to quaternary structure, interacts with UvrB in an incision complex.

The protein resides in the cytoplasm. Its function is as follows. The UvrABC repair system catalyzes the recognition and processing of DNA lesions. UvrC both incises the 5' and 3' sides of the lesion. The N-terminal half is responsible for the 3' incision and the C-terminal half is responsible for the 5' incision. This is UvrABC system protein C from Albidiferax ferrireducens (strain ATCC BAA-621 / DSM 15236 / T118) (Rhodoferax ferrireducens).